A 230-amino-acid chain; its full sequence is Uracil-DNA glycosylase (230 aa).

Residue Asp-70 is the Proton acceptor of the active site.

It belongs to the uracil-DNA glycosylase (UDG) superfamily. UNG family.

The protein resides in the cytoplasm. It catalyses the reaction Hydrolyzes single-stranded DNA or mismatched double-stranded DNA and polynucleotides, releasing free uracil.. Functionally, excises uracil residues from the DNA which can arise as a result of misincorporation of dUMP residues by DNA polymerase or due to deamination of cytosine. This Pseudomonas putida (strain GB-1) protein is Uracil-DNA glycosylase.